Reading from the N-terminus, the 392-residue chain is Methylthioribose kinase (392 aa).

Residues Asn38, Lys53, and 107 to 109 contribute to the ATP site; that span reads EDL. Asp225 serves as a coordination point for substrate. 242-244 is a binding site for ATP; it reads DPE. Residue Arg332 participates in substrate binding.

Belongs to the methylthioribose kinase family. As to quaternary structure, homodimer.

The catalysed reaction is 5-(methylsulfanyl)-D-ribose + ATP = 5-(methylsulfanyl)-alpha-D-ribose 1-phosphate + ADP + H(+). The protein operates within amino-acid biosynthesis; L-methionine biosynthesis via salvage pathway; S-methyl-5-thio-alpha-D-ribose 1-phosphate from S-methyl-5'-thioadenosine (hydrolase route): step 2/2. Functionally, catalyzes the phosphorylation of methylthioribose into methylthioribose-1-phosphate. The chain is Methylthioribose kinase from Bacillus mycoides (strain KBAB4) (Bacillus weihenstephanensis).